A 153-amino-acid polypeptide reads, in one-letter code: Transcriptional repressor NrdR 2 (153 aa).

The segment at Cys3–Cys34 is a zinc-finger region. The ATP-cone domain maps to Leu49–Asp139.

It belongs to the NrdR family. It depends on Zn(2+) as a cofactor.

In terms of biological role, negatively regulates transcription of bacterial ribonucleotide reductase nrd genes and operons by binding to NrdR-boxes. The sequence is that of Transcriptional repressor NrdR 2 from Paramagnetospirillum magneticum (strain ATCC 700264 / AMB-1) (Magnetospirillum magneticum).